Here is a 106-residue protein sequence, read N- to C-terminus: UPF0145 protein Csac_0771 (106 aa).

Belongs to the UPF0145 family.

This is UPF0145 protein Csac_0771 from Caldicellulosiruptor saccharolyticus (strain ATCC 43494 / DSM 8903 / Tp8T 6331).